The chain runs to 102 residues: ATP-dependent Clp protease adapter protein ClpS (102 aa).

Belongs to the ClpS family. Binds to the N-terminal domain of the chaperone ClpA.

Functionally, involved in the modulation of the specificity of the ClpAP-mediated ATP-dependent protein degradation. This chain is ATP-dependent Clp protease adapter protein ClpS, found in Shewanella putrefaciens (strain CN-32 / ATCC BAA-453).